Here is a 263-residue protein sequence, read N- to C-terminus: tRNA (guanine-N(7)-)-methyltransferase (263 aa).

The disordered stretch occupies residues 1-39; the sequence is MVHHGQMHAQPGVGLRPDTPVASGQLPSTSIRSRRSGIS. S-adenosyl-L-methionine is bound by residues glutamate 82, aspartate 107, asparagine 136, and aspartate 159. Aspartate 159 is an active-site residue. Substrate is bound by residues lysine 163, aspartate 195, and 232–235; that span reads TKYE.

It belongs to the class I-like SAM-binding methyltransferase superfamily. TrmB family.

It catalyses the reaction guanosine(46) in tRNA + S-adenosyl-L-methionine = N(7)-methylguanosine(46) in tRNA + S-adenosyl-L-homocysteine. The protein operates within tRNA modification; N(7)-methylguanine-tRNA biosynthesis. Its function is as follows. Catalyzes the formation of N(7)-methylguanine at position 46 (m7G46) in tRNA. This chain is tRNA (guanine-N(7)-)-methyltransferase, found in Mycobacterium bovis (strain ATCC BAA-935 / AF2122/97).